Here is a 43-residue protein sequence, read N- to C-terminus: Potassium channel toxin gamma-KTx 3.2 (43 aa).

4 disulfides stabilise this stretch: Cys5-Cys23, Cys11-Cys34, Cys20-Cys39, and Cys24-Cys41.

This sequence belongs to the ergtoxin family. Gamma-KTx 3 subfamily. In terms of tissue distribution, expressed by the venom gland.

Its subcellular location is the secreted. Functionally, blocks Kv11/ERG potassium channels. This chain is Potassium channel toxin gamma-KTx 3.2, found in Centruroides elegans (Bark scorpion).